The sequence spans 451 residues: UDP-glucosyltransferase 74AE2 (451 aa).

Residue histidine 17 is the Proton acceptor of the active site. An anthocyanidin is bound at residue histidine 17. Aspartate 108 functions as the Charge relay in the catalytic mechanism. Residues threonine 130, glutamine 330, histidine 345, tryptophan 348, asparagine 349, serine 350, glutamate 353, aspartate 369, and glutamine 370 each contribute to the UDP-alpha-D-glucose site.

The protein belongs to the UDP-glycosyltransferase family. As to expression, expressed at higher levels in roots than in leaves.

The catalysed reaction is (20S)-ginsenoside C-K + UDP-alpha-D-glucose = (20S)-ginsenoside F2 + UDP + H(+). It catalyses the reaction (20S)-protopanaxadiol + UDP-alpha-D-glucose = (20S)-ginsenoside Rh2 + UDP + H(+). The protein operates within secondary metabolite biosynthesis; terpenoid biosynthesis. In terms of biological role, component of the dammarane-type triterpene saponins (e.g. PPD-type ginsenosides or panaxosides) biosynthetic pathway. Glycosyltransferase that catalyzes the biosynthesis of ginsenoside Rh2 from protopanaxadiol (PPD) and the conversion of compound K to ginsenoside F2. This Panax ginseng (Korean ginseng) protein is UDP-glucosyltransferase 74AE2.